Reading from the N-terminus, the 276-residue chain is NH(3)-dependent NAD(+) synthetase (276 aa).

43 to 50 (GISGGVDS) contributes to the ATP binding site. Residue D49 coordinates Mg(2+). Residue R146 participates in deamido-NAD(+) binding. T166 lines the ATP pocket. E171 is a binding site for Mg(2+). Deamido-NAD(+) is bound by residues K179 and D186. Residues K195 and T217 each contribute to the ATP site. 266–267 (HK) is a binding site for deamido-NAD(+).

It belongs to the NAD synthetase family. In terms of assembly, homodimer.

The catalysed reaction is deamido-NAD(+) + NH4(+) + ATP = AMP + diphosphate + NAD(+) + H(+). It participates in cofactor biosynthesis; NAD(+) biosynthesis; NAD(+) from deamido-NAD(+) (ammonia route): step 1/1. Its function is as follows. Catalyzes the ATP-dependent amidation of deamido-NAD to form NAD. Uses ammonia as a nitrogen source. The sequence is that of NH(3)-dependent NAD(+) synthetase from Shewanella oneidensis (strain ATCC 700550 / JCM 31522 / CIP 106686 / LMG 19005 / NCIMB 14063 / MR-1).